We begin with the raw amino-acid sequence, 297 residues long: 4-diphosphocytidyl-2-C-methyl-D-erythritol kinase (297 aa).

Catalysis depends on residues Lys-6 and Asp-144.

The protein belongs to the GHMP kinase family. IspE subfamily.

The enzyme catalyses 4-CDP-2-C-methyl-D-erythritol + ATP = 4-CDP-2-C-methyl-D-erythritol 2-phosphate + ADP + H(+). It participates in isoprenoid biosynthesis; isopentenyl diphosphate biosynthesis via DXP pathway; isopentenyl diphosphate from 1-deoxy-D-xylulose 5-phosphate: step 3/6. Functionally, catalyzes the phosphorylation of the position 2 hydroxy group of 4-diphosphocytidyl-2C-methyl-D-erythritol. This is 4-diphosphocytidyl-2-C-methyl-D-erythritol kinase from Leptospira interrogans serogroup Icterohaemorrhagiae serovar copenhageni (strain Fiocruz L1-130).